Reading from the N-terminus, the 945-residue chain is Nonsense-mediated mRNA decay factor SMG8 (945 aa).

2 disordered regions span residues 563–604 and 633–671; these read RAEP…SANE and AEAE…ERSA.

The protein belongs to the SMG8 family.

In terms of biological role, involved in nonsense-mediated decay (NMD) of mRNAs containing premature stop codons. Probable component of kinase complex containing nonC and recruited to stalled ribosomes. This chain is Nonsense-mediated mRNA decay factor SMG8, found in Drosophila grimshawi (Hawaiian fruit fly).